Reading from the N-terminus, the 303-residue chain is Monoglyceride lipase (303 aa).

A Phosphothreonine modification is found at Thr-10. 3'-nitrotyrosine is present on Tyr-58. The Nucleophile role is filled by Ser-122. Ser-189 carries the phosphoserine modification. Residues Asp-239 and His-269 each act as charge relay system in the active site.

The protein belongs to the AB hydrolase superfamily. Monoacylglycerol lipase family. Homodimer. Ubiquitous.

It is found in the cytoplasm. Its subcellular location is the cytosol. The protein localises to the membrane. It catalyses the reaction Hydrolyzes glycerol monoesters of long-chain fatty acids.. The catalysed reaction is a 1-acylglycerol + H2O = glycerol + a fatty acid + H(+). The enzyme catalyses a 2-acylglycerol + H2O = glycerol + a fatty acid + H(+). It carries out the reaction 2-(5Z,8Z,11Z,14Z-eicosatetraenoyl)-glycerol + H2O = glycerol + (5Z,8Z,11Z,14Z)-eicosatetraenoate + H(+). It catalyses the reaction 1-octanoylglycerol + H2O = octanoate + glycerol + H(+). The catalysed reaction is 1-decanoylglycerol + H2O = decanoate + glycerol + H(+). The enzyme catalyses 1-dodecanoylglycerol + H2O = dodecanoate + glycerol + H(+). It carries out the reaction 1-tetradecanoylglycerol + H2O = tetradecanoate + glycerol + H(+). It catalyses the reaction 2-hexadecanoylglycerol + H2O = glycerol + hexadecanoate + H(+). The catalysed reaction is 1-(9Z-octadecenoyl)-glycerol + H2O = glycerol + (9Z)-octadecenoate + H(+). The enzyme catalyses 2-(9Z-octadecenoyl)-glycerol + H2O = glycerol + (9Z)-octadecenoate + H(+). It carries out the reaction 2-(9Z,12Z-octadecadienoyl)-glycerol + H2O = (9Z,12Z)-octadecadienoate + glycerol + H(+). It catalyses the reaction 1-(5Z,8Z,11Z,14Z-eicosatetraenoyl)-glycerol + H2O = glycerol + (5Z,8Z,11Z,14Z)-eicosatetraenoate + H(+). The catalysed reaction is 1-(9Z,12Z-octadecadienoyl)-glycerol + H2O = (9Z,12Z)-octadecadienoate + glycerol + H(+). The enzyme catalyses 1-hexadecanoylglycerol + H2O = glycerol + hexadecanoate + H(+). It carries out the reaction 1-octadecanoylglycerol + H2O = octadecanoate + glycerol + H(+). It catalyses the reaction prostaglandin E2 1-glyceryl ester + H2O = prostaglandin E2 + glycerol + H(+). The catalysed reaction is prostaglandin D2-1-glycerol ester + H2O = prostaglandin D2 + glycerol + H(+). The enzyme catalyses 2-glyceryl-15-deoxy-Delta(12,14)-prostaglandin J2 + H2O = 15-deoxy-Delta(12,14)-prostaglandin J2 + glycerol + H(+). It carries out the reaction prostaglandin F2alpha 1-glyceryl ester + H2O = prostaglandin F2alpha + glycerol + H(+). It participates in glycerolipid metabolism; triacylglycerol degradation. Converts monoacylglycerides to free fatty acids and glycerol. Hydrolyzes the endocannabinoid 2-arachidonoylglycerol, and thereby contributes to the regulation of endocannabinoid signaling, nociperception and perception of pain. Regulates the levels of fatty acids that serve as signaling molecules and promote cancer cell migration, invasion and tumor growth. The sequence is that of Monoglyceride lipase from Mus musculus (Mouse).